A 256-amino-acid polypeptide reads, in one-letter code: Probable sulfite/organosulfonate exporter TauE (256 aa).

8 consecutive transmembrane segments (helical) span residues 5–25 (LLLP…FQTV), 33–53 (IVMG…AAVV), 76–96 (AVAA…LVLE), 103–123 (ATLL…SAAL), 142–162 (VFGG…IFQF), 172–190 (IRCA…RTLF), 199–219 (AAVC…TLLG), and 236–256 (FGVL…AWVL).

Belongs to the 4-toluene sulfonate uptake permease (TSUP) (TC 2.A.102) family.

It is found in the cell inner membrane. Its function is as follows. Could be a sulfite/organosulfonate exporter with a wide substrate range, including 3-sulfolactate and 3-sulfopyruvate. This is Probable sulfite/organosulfonate exporter TauE from Cupriavidus necator (strain ATCC 17699 / DSM 428 / KCTC 22496 / NCIMB 10442 / H16 / Stanier 337) (Ralstonia eutropha).